A 345-amino-acid chain; its full sequence is N-glycosylase/DNA lyase (345 aa).

Residues asparagine 149, arginine 154, and arginine 204 each contribute to the DNA site. Lysine 249 serves as the catalytic Schiff-base intermediate with DNA. Positions 266 and 268 each coordinate 8-oxoguanine. The DNA site is built by histidine 270 and glutamine 287. The 8-oxoguanine site is built by glutamine 315 and phenylalanine 319. A compositionally biased stretch (basic and acidic residues) spans 324–334; sequence RQSRHAQEPPA. The segment at 324–345 is disordered; that stretch reads RQSRHAQEPPAKRRKGSKGPEG. Residues 335–345 are compositionally biased toward basic residues; the sequence is KRRKGSKGPEG.

This sequence belongs to the type-1 OGG1 family. Ubiquitous.

The protein resides in the nucleus. It localises to the nucleoplasm. It is found in the nucleus speckle. Its subcellular location is the nucleus matrix. The protein localises to the mitochondrion. It carries out the reaction 2'-deoxyribonucleotide-(2'-deoxyribose 5'-phosphate)-2'-deoxyribonucleotide-DNA = a 3'-end 2'-deoxyribonucleotide-(2,3-dehydro-2,3-deoxyribose 5'-phosphate)-DNA + a 5'-end 5'-phospho-2'-deoxyribonucleoside-DNA + H(+). DNA repair enzyme that incises DNA at 8-oxoG residues. Excises 7,8-dihydro-8-oxoguanine and 2,6-diamino-4-hydroxy-5-N-methylformamidopyrimidine (FAPY) from damaged DNA. Has a beta-lyase activity that nicks DNA 3' to the lesion. This chain is N-glycosylase/DNA lyase (OGG1), found in Homo sapiens (Human).